The chain runs to 117 residues: Acidic phospholipase A2 PA-1G (117 aa).

7 disulfides stabilise this stretch: Cys11-Cys71, Cys27-Cys117, Cys29-Cys45, Cys44-Cys98, Cys51-Cys91, Cys60-Cys84, and Cys78-Cys89. Positions 28, 30, and 32 each coordinate Ca(2+). The active site involves His48. Asp49 is a binding site for Ca(2+). Residue Asp92 is part of the active site.

It belongs to the phospholipase A2 family. Group I subfamily. D49 sub-subfamily. Requires Ca(2+) as cofactor. Expressed by the venom gland.

The protein resides in the secreted. It carries out the reaction a 1,2-diacyl-sn-glycero-3-phosphocholine + H2O = a 1-acyl-sn-glycero-3-phosphocholine + a fatty acid + H(+). In terms of biological role, PLA2 catalyzes the calcium-dependent hydrolysis of the 2-acyl groups in 3-sn-phosphoglycerides. This is Acidic phospholipase A2 PA-1G from Pseudechis australis (Mulga snake).